A 78-amino-acid chain; its full sequence is Acyl carrier protein (78 aa).

A Carrier domain is found at 4–78; that stretch reads AEIRDKVYDI…QQAIDYIVKK (75 aa). At Ser39 the chain carries O-(pantetheine 4'-phosphoryl)serine.

This sequence belongs to the acyl carrier protein (ACP) family. 4'-phosphopantetheine is transferred from CoA to a specific serine of apo-ACP by AcpS. This modification is essential for activity because fatty acids are bound in thioester linkage to the sulfhydryl of the prosthetic group.

The protein localises to the cytoplasm. The protein operates within lipid metabolism; fatty acid biosynthesis. In terms of biological role, carrier of the growing fatty acid chain in fatty acid biosynthesis. This Chlorobium luteolum (strain DSM 273 / BCRC 81028 / 2530) (Pelodictyon luteolum) protein is Acyl carrier protein.